The chain runs to 496 residues: Glycogen synthase (496 aa).

ADP-alpha-D-glucose is bound at residue K15.

It belongs to the glycosyltransferase 1 family. Bacterial/plant glycogen synthase subfamily.

It carries out the reaction [(1-&gt;4)-alpha-D-glucosyl](n) + ADP-alpha-D-glucose = [(1-&gt;4)-alpha-D-glucosyl](n+1) + ADP + H(+). Its pathway is glycan biosynthesis; glycogen biosynthesis. Synthesizes alpha-1,4-glucan chains using ADP-glucose. This Natranaerobius thermophilus (strain ATCC BAA-1301 / DSM 18059 / JW/NM-WN-LF) protein is Glycogen synthase.